A 1094-amino-acid chain; its full sequence is Probable arabinosyltransferase C (1094 aa).

13 consecutive transmembrane segments (helical) span residues 28 to 50, 232 to 251, 264 to 286, 341 to 360, 373 to 392, 431 to 453, 466 to 488, 530 to 552, 565 to 582, 586 to 608, 620 to 642, 657 to 679, and 700 to 722; these read IARY…TPLL, AAMI…LHIL, PARW…WWHF, SIWM…WVIS, TSRA…WLPL, IGAL…LVAI, RFGV…IPIF, SIAR…AMSL, SRRI…MMFT, WTHH…AVAV, TVFA…GWWY, WRWS…AAWF, and LAGI…EVVS. The segment covering 817–831 has biased composition (low complexity); the sequence is GSEPGTEGGTTAAPG. Residues 817–836 form a disordered region; the sequence is GSEPGTEGGTTAAPGINGSR.

This sequence belongs to the emb family.

The protein localises to the cell membrane. Arabinosyl transferase responsible for the polymerization of arabinose into the arabinan of arabinogalactan. The protein is Probable arabinosyltransferase C (embC) of Mycobacterium bovis (strain ATCC BAA-935 / AF2122/97).